The primary structure comprises 980 residues: Serine/threonine-protein phosphatase 4 regulatory subunit 3 (980 aa).

Residues 1–105 (MTTDTRRRVK…EKICQVQGKD (105 aa)) form the WH1 domain. Disordered stretches follow at residues 640-668 (RDKMENRTDGGLPIIRSGGRFRRDQRQME), 695-861 (VSEK…SLCD), and 885-980 (VTAA…ARQA). Residues 695 to 708 (VSEKNGPQTQNQQK) show a composition bias toward polar residues. 4 stretches are compositionally biased toward low complexity: residues 709–749 (SSPP…SSSP), 757–789 (QTQAAVHLAAAALQHHQQQQQQQQQNPFQQQTQ), 803–859 (EAPQ…AASL), and 885–926 (VTAA…SPAS). Over residues 929-939 (QDANSTEGTSS) the composition is skewed to polar residues. The span at 940-951 (EADKTTAKKGLV) shows a compositional bias: basic and acidic residues. Residues 953 to 968 (YESDSGEDDYEEDEYS) show a composition bias toward acidic residues.

Belongs to the SMEK family. As to quaternary structure, serine/threonine-protein phosphatase 4 (PP4) occurs in different assemblies of the catalytic and one or more regulatory subunits. Probably part of a PP4 PPP4C-PPP4R2-PPP4R3 complex containing Pp4-19C, PPP4R2r and flfl. Interacts with mira. As to expression, expressed in neuroblasts.

The protein resides in the nucleus. It localises to the membrane. It is found in the cytoplasm. Regulatory subunit of serine/threonine-protein phosphatase 4. The probable PP4 complex Pp4-19C-PPP4R2r-flfl (PPP4C-PPP4R2-PPP4R3) is required to prevent caspase induced cell death (in vitro). May be involved in DNA damage repair. Key mediator specific for the localization of mira and associated cell fate determinants during both interphase and mitosis. Nuclear Flfl is required to exclude mira/pros from the nucleus when inefficiently bound to the cytoskeleton/cortex, whereas cytosolic or membrane-associated flfl is required for the cortical association and asymmetric localization of mira/pros/brat/stau at metaphase and anaphase. The polypeptide is Serine/threonine-protein phosphatase 4 regulatory subunit 3 (flfl) (Drosophila melanogaster (Fruit fly)).